Here is a 295-residue protein sequence, read N- to C-terminus: Mediator of RNA polymerase II transcription subunit 27 (295 aa).

The protein belongs to the Mediator complex subunit 27 family. Component of the Mediator complex.

It localises to the nucleus. Functionally, component of the Mediator complex, a coactivator involved in the regulated transcription of nearly all RNA polymerase II-dependent genes. Mediator functions as a bridge to convey information from gene-specific regulatory proteins to the basal RNA polymerase II transcription machinery. Mediator is recruited to promoters by direct interactions with regulatory proteins and serves as a scaffold for the assembly of a functional preinitiation complex with RNA polymerase II and the general transcription factors. The polypeptide is Mediator of RNA polymerase II transcription subunit 27 (MED27) (Anopheles gambiae (African malaria mosquito)).